A 132-amino-acid polypeptide reads, in one-letter code: Tumor suppressor ARF (132 aa).

The tract at residues 1 to 64 (MVRRFLVTLR…LGQQPLPRRP (64 aa)) is interaction with CDK5RAP3 and MDM2. The disordered stretch occupies residues 56–132 (GQQPLPRRPG…CLGPSARGPG (77 aa)). The segment covering 71–83 (RPSGGAAAAPRRG) has biased composition (low complexity). The span at 84-99 (AQLRRPRHSHPTRARR) shows a compositional bias: basic residues. Residues 103–117 (GLPGHAGGAAPGRGA) show a composition bias toward gly residues.

Does not interact with cyclins, CDK1, CDK2, CDK4, CDK5 or CDK6. Binds to BCL6, E2F1, HUWE1, MDM2, MYC, NPM1/B23, TOP1/TOPOI and UBE2I/UBC9. Interacts with TBRG1 and COMMD1. Interacts with CDKN2AIP and E4F1. Interacts with CDK5RAP3 and MDM2; form a ternary complex involved in regulation of p53/TP53. Interacts with NOP53; the interaction is direct and promotes ARF nucleoplasmic relocalization and ubiquitin-mediated proteasomal degradation. Interacts with TTF1 (via the N-terminal region (NRD) and a C-terminal region); the interaction is direct and inhibits the nucleolar localization of TTF1. In terms of assembly, interacts with C1QBP. In terms of processing, ubiquitinated in normal cells by TRIP12 via the ubiquitin fusion degradation (UFD) pathway, a process that mediates ubiquitination at the N-terminus, regardless of the absence of lysine residues. Ubiquitination leads to its proteasomal degradation. In cancer cells, however, TRIP12 is located in a different cell compartment, preventing ubiquitination and degradation.

It is found in the nucleus. Its subcellular location is the nucleolus. It localises to the nucleoplasm. The protein localises to the mitochondrion. Capable of inducing cell cycle arrest in G1 and G2 phases. Acts as a tumor suppressor. Binds to MDM2 and blocks its nucleocytoplasmic shuttling by sequestering it in the nucleolus. This inhibits the oncogenic action of MDM2 by blocking MDM2-induced degradation of p53 and enhancing p53-dependent transactivation and apoptosis. Also induces G2 arrest and apoptosis in a p53-independent manner by preventing the activation of cyclin B1/CDC2 complexes. Binds to BCL6 and down-regulates BCL6-induced transcriptional repression. Binds to E2F1 and MYC and blocks their transcriptional activator activity but has no effect on MYC transcriptional repression. Binds to TOP1/TOPOI and stimulates its activity. This complex binds to rRNA gene promoters and may play a role in rRNA transcription and/or maturation. Interacts with NPM1/B23 and promotes its polyubiquitination and degradation, thus inhibiting rRNA processing. Plays a role in inhibiting ribosome biogenesis, perhaps by binding to the nucleolar localization sequence of transcription termination factor TTF1, and thereby preventing nucleolar localization of TTF1. Interacts with COMMD1 and promotes its 'Lys63'-linked polyubiquitination. Interacts with UBE2I/UBC9 and enhances sumoylation of a number of its binding partners including MDM2 and E2F1. Binds to HUWE1 and represses its ubiquitin ligase activity. May play a role in controlling cell proliferation and apoptosis during mammary gland development. Its function is as follows. May be involved in regulation of autophagy and caspase-independent cell death; the short-lived mitochondrial isoform is stabilized by C1QBP. The chain is Tumor suppressor ARF from Homo sapiens (Human).